Consider the following 195-residue polypeptide: Large ribosomal subunit protein uL5 (195 aa).

Positions 1–25 (MARVPPPALKKDKKEKKPPKDNSKN) are disordered.

Belongs to the universal ribosomal protein uL5 family. As to quaternary structure, component of the large ribosomal subunit.

Its subcellular location is the nucleus. It is found in the cytoplasm. Component of the ribosome, a large ribonucleoprotein complex responsible for the synthesis of proteins in the cell. The small ribosomal subunit (SSU) binds messenger RNAs (mRNAs) and translates the encoded message by selecting cognate aminoacyl-transfer RNA (tRNA) molecules. The large subunit (LSU) contains the ribosomal catalytic site termed the peptidyl transferase center (PTC), which catalyzes the formation of peptide bonds, thereby polymerizing the amino acids delivered by tRNAs into a polypeptide chain. The nascent polypeptides leave the ribosome through a tunnel in the LSU and interact with protein factors that function in enzymatic processing, targeting, and the membrane insertion of nascent chains at the exit of the ribosomal tunnel. In Spodoptera frugiperda (Fall armyworm), this protein is Large ribosomal subunit protein uL5 (RpL11).